Here is a 225-residue protein sequence, read N- to C-terminus: MTPPMNKLTSKLGYTFKETELLNLALTHRSANGKHNERLEFLGDSILSFVIADELYRRFPKVNEGDMSRMRATLVRGNTLAELGREFDLGDYLKLGPGELKSGGFRRDSILADAVEAIIGAIYLDSDLETARSIVLEWYHGRLEEIKPGASQKDPKTRLQEFLQGRRKPLPVYTVTNIKGEAHNQEFTVACEVAGMDTPVIGKGTSRRKAEQAAAETALEQLTNG.

The 123-residue stretch at 5 to 127 (MNKLTSKLGY…IIGAIYLDSD (123 aa)) folds into the RNase III domain. Glu40 provides a ligand contact to Mg(2+). Asp44 is an active-site residue. The Mg(2+) site is built by Asp113 and Glu116. Glu116 is a catalytic residue. Positions 154-224 (DPKTRLQEFL…AETALEQLTN (71 aa)) constitute a DRBM domain.

This sequence belongs to the ribonuclease III family. In terms of assembly, homodimer. Mg(2+) is required as a cofactor.

Its subcellular location is the cytoplasm. The enzyme catalyses Endonucleolytic cleavage to 5'-phosphomonoester.. Functionally, digests double-stranded RNA. Involved in the processing of primary rRNA transcript to yield the immediate precursors to the large and small rRNAs (23S and 16S). Processes some mRNAs, and tRNAs when they are encoded in the rRNA operon. Processes pre-crRNA and tracrRNA of type II CRISPR loci if present in the organism. In Vibrio cholerae serotype O1 (strain ATCC 39315 / El Tor Inaba N16961), this protein is Ribonuclease 3.